The primary structure comprises 152 residues: Transmembrane protein 35B (152 aa).

The N-terminal stretch at 1–21 (MLVSLGALRVLLGIFFTLTGA) is a signal peptide. 3 consecutive transmembrane segments (helical) span residues 62 to 82 (AAVG…PPVL), 85 to 105 (ISNV…VVLE), and 111 to 131 (YIPA…QFLV).

The protein belongs to the DoxX family.

The protein localises to the membrane. In Rattus norvegicus (Rat), this protein is Transmembrane protein 35B.